The sequence spans 494 residues: Xylan glycosyltransferase MUCI21 (494 aa).

Over 1-40 (MRQNLKKVAQIKVDESKKLFPYVFRVKTSCGNCAKRSKPK) the chain is Cytoplasmic. A helical; Signal-anchor for type II membrane protein membrane pass occupies residues 41 to 61 (LIYLLIFSLISSCFVFAPQLL). Topologically, residues 62–494 (CFPYPSALFL…LIDAYAKSIR (433 aa)) are lumenal. Asn-375 carries N-linked (GlcNAc...) asparagine glycosylation.

This sequence belongs to the glycosyltransferase 61 family.

Its subcellular location is the golgi apparatus membrane. Glycosyletransferase required for the proper composition and structural properties of released seed coat mucilage. Required for the production of highly branched xylan polymers in seed coat mucilage. Facilitates the addition of xylose residues directly to the xylan backbone. Xylan with xylose side chains seems to be necessary for pectin attachment to the seed surface. Essential for xylan synthesis in seed coat epidermal (SCE) cells. This is Xylan glycosyltransferase MUCI21 from Arabidopsis thaliana (Mouse-ear cress).